The sequence spans 307 residues: G-protein coupled receptor 35 (307 aa).

Topologically, residues 1-18 (MNSTTCNSTLTWPASVNN) are extracellular. 2 N-linked (GlcNAc...) asparagine glycosylation sites follow: Asn2 and Asn7. The chain crosses the membrane as a helical span at residues 19-39 (FFIIYSALLLVLGLLLNSVAL). The Cytoplasmic portion of the chain corresponds to 40 to 53 (WVFCYRMHQWTETR). The helical transmembrane segment at 54–74 (IYMTNLAVADLCLLCSLPFVL) threads the bilayer. At 75-88 (YSLKYSSSDTPVCQ) the chain is on the extracellular side. Cys87 and Cys160 form a disulfide bridge. The helical transmembrane segment at 89–110 (LSQGIYLANRYMSISLVTAIAV) threads the bilayer. At 111–129 (DRYVAVRHPLRARELRSPR) the chain is on the cytoplasmic side. Residues 130-150 (QAAAVCVALWVIVVTSLVVRW) form a helical membrane-spanning segment. Residues 151 to 176 (RLGMQEGGFCFSSQTRRNFSTTAFSL) are Extracellular-facing. The helical transmembrane segment at 177–197 (LGFYLPLAIVVFCSLQVVTVL) threads the bilayer. The Cytoplasmic segment spans residues 198–217 (SRRPAADVGQAEATQKATHM). The chain crosses the membrane as a helical span at residues 218–238 (VWANLAVFVICFLPLHVVLTV). The Extracellular segment spans residues 239–257 (QVSLNLNTCAARDTFSRAL). The helical transmembrane segment at 258–278 (SITGKLSDTNCCLDAICYYYM) threads the bilayer. Topologically, residues 279-307 (AREFQEASKPATSSNTPHKSQDSQILSLT) are cytoplasmic. Phosphoserine is present on residues Ser286, Ser292, Ser298, and Ser301. The interval 288 to 307 (PATSSNTPHKSQDSQILSLT) is disordered.

Belongs to the G-protein coupled receptor 1 family. In terms of processing, multiply phosphorylated in clusters of serines and threonines in the C-terminal tail. Phosphorylation of Ser-298 and Ser-301 is mediated by GRK5 and/or GRK6. In terms of tissue distribution, predominantly expressed in immune and gastrointestinal tissues. Strongly GPR35 expressed in colonic macrophages.

It localises to the cell membrane. Functionally, G-protein coupled receptor that binds to several ligands including the tryptophan metabolite kynurenic acid (KYNA), lysophosphatidic acid (LPA) or 5-hydroxyindoleacetic acid (5-HIAA) with high affinity, leading to rapid and transient activation of numerous intracellular signaling pathways. Plays a role in neutrophil recruitment to sites of inflammation and bacterial clearance through the major serotonin metabolite 5-HIAA that acts as a physiological ligand. Stimulates lipid metabolism, thermogenic, and anti-inflammatory gene expression in adipose tissue once activated by kynurenic acid. In macrophages, activation by lysophosphatidic acid promotes GPR35-induced signaling with a distinct transcriptional profile characterized by TNF production associated with ERK and NF-kappa-B activation. In turn, induces chemotaxis of macrophages. The polypeptide is G-protein coupled receptor 35 (Gpr35) (Mus musculus (Mouse)).